The chain runs to 509 residues: ATP synthase subunit alpha (509 aa).

Position 169 to 176 (169 to 176 (GDRQTGKT)) interacts with ATP.

It belongs to the ATPase alpha/beta chains family. As to quaternary structure, F-type ATPases have 2 components, CF(1) - the catalytic core - and CF(0) - the membrane proton channel. CF(1) has five subunits: alpha(3), beta(3), gamma(1), delta(1), epsilon(1). CF(0) has three main subunits: a(1), b(2) and c(9-12). The alpha and beta chains form an alternating ring which encloses part of the gamma chain. CF(1) is attached to CF(0) by a central stalk formed by the gamma and epsilon chains, while a peripheral stalk is formed by the delta and b chains.

It is found in the cell inner membrane. The catalysed reaction is ATP + H2O + 4 H(+)(in) = ADP + phosphate + 5 H(+)(out). In terms of biological role, produces ATP from ADP in the presence of a proton gradient across the membrane. The alpha chain is a regulatory subunit. This chain is ATP synthase subunit alpha, found in Novosphingobium aromaticivorans (strain ATCC 700278 / DSM 12444 / CCUG 56034 / CIP 105152 / NBRC 16084 / F199).